Here is a 538-residue protein sequence, read N- to C-terminus: Bifunctional purine biosynthesis protein PurH (538 aa).

Residues 8–158 enclose the MGS-like domain; the sequence is IPAPDKVEIK…KNHAYVTILT (151 aa).

It belongs to the PurH family.

The enzyme catalyses (6R)-10-formyltetrahydrofolate + 5-amino-1-(5-phospho-beta-D-ribosyl)imidazole-4-carboxamide = 5-formamido-1-(5-phospho-D-ribosyl)imidazole-4-carboxamide + (6S)-5,6,7,8-tetrahydrofolate. It carries out the reaction IMP + H2O = 5-formamido-1-(5-phospho-D-ribosyl)imidazole-4-carboxamide. It functions in the pathway purine metabolism; IMP biosynthesis via de novo pathway; 5-formamido-1-(5-phospho-D-ribosyl)imidazole-4-carboxamide from 5-amino-1-(5-phospho-D-ribosyl)imidazole-4-carboxamide (10-formyl THF route): step 1/1. It participates in purine metabolism; IMP biosynthesis via de novo pathway; IMP from 5-formamido-1-(5-phospho-D-ribosyl)imidazole-4-carboxamide: step 1/1. The chain is Bifunctional purine biosynthesis protein PurH from Rhizobium etli (strain ATCC 51251 / DSM 11541 / JCM 21823 / NBRC 15573 / CFN 42).